The following is a 1708-amino-acid chain: Rapamycin-insensitive companion of mTOR (1708 aa).

Residues 1–789 (MAAIGRGRSL…DKANLHALIQ (789 aa)) form an interaction with NBN region. Phosphoserine is present on residues S21, S35, and S265. K274 participates in a covalent cross-link: Glycyl lysine isopeptide (Lys-Gly) (interchain with G-Cter in ubiquitin). Residues 521–570 (LKDTEEALLINLRDSQVLQHKENLDWDWNLIGTILKWPNVNLRNYKDEQL) form a ribosome-binding domain region. Positions 543, 572, and 576 each coordinate ATP. Residues 1021 to 1043 (TLSLNSESTSSRHNSESESAPSS) show a composition bias toward low complexity. Residues 1021–1045 (TLSLNSESTSSRHNSESESAPSSMF) form a disordered region. K1092 and K1095 each carry N6-acetyllysine. Disordered regions lie at residues 1101–1198 (SLTL…ENTS) and 1218–1247 (SFNTDTTTSGISSMSSSPSRETVAVDPTAM). T1103 carries the post-translational modification Phosphothreonine. An N6-acetyllysine mark is found at K1116, K1119, and K1125. Position 1135 is a phosphothreonine; by RPS6KB1 (T1135). Position 1138 is a phosphoserine (S1138). Polar residues predominate over residues 1147–1158 (FTSSSAQKSLQL). A phosphoserine mark is found at S1161, S1218, and S1234. The segment covering 1221–1239 (TDTTTSGISSMSSSPSRET) has biased composition (low complexity). The residue at position 1270 (T1270) is a Phosphothreonine. Phosphoserine is present on residues S1273, S1277, S1281, and S1283. The residue at position 1294 (T1294) is a Phosphothreonine. Residues S1301 and S1312 each carry the phosphoserine modification. T1331 is modified (phosphothreonine). 2 positions are modified to phosphoserine: S1345 and S1352. Residue T1375 is modified to Phosphothreonine. At S1384 the chain carries Phosphoserine. Y1385 carries the post-translational modification Phosphotyrosine. 3 positions are modified to phosphoserine: S1387, S1395, and S1410. Positions 1514, 1519, and 1522 each coordinate Zn(2+). Residues S1570, S1573, S1576, and S1591 each carry the phosphoserine modification. C1651 contacts Zn(2+).

Belongs to the RICTOR family. As to quaternary structure, component of the mechanistic target of rapamycin complex 2 (mTORC2), consisting in two heterotretramers composed of MTOR, MLST8, RICTOR and MAPKAP1/SIN1. The mTORC2 core complex associates with PRR5/PROTOR1 and/or PRR5L/PROTOR2. Contrary to mTORC1, mTORC2 does not bind to and is not sensitive to FKBP12-rapamycin. Binds directly to MTOR and PRR5 within the TORC2 complex; interaction with MTOR is enhanced by deubiquitination of RICTOR by USP9X. Interaction with MAPKAP1 is not enhanced by RICTOR deubiquitination by USP9X. Interacts with CCDC28B. Interacts with NBN. Interacts with SIK3. Interacts with NCKAP1L. Interacts with ARMH4 (via cytoplasmic tail); this interaction bridges ARMH4 to the mTORC2 complex and inhibits the mTORC2 kinase activity. Interacts with UBXN2A. Interacts with TSPAN8. In terms of processing, phosphorylated by MTOR; when part of mTORC2. Phosphorylated at Thr-1135 by RPS6KB1 downstream of the mTORC1 complex: phosphorylation of RICTOR inhibits mTORC2 signaling by creating a binding site for 14-3-3 proteins. Phosphorylated at Ser-1234 by GSK3B in response to endoplasmic stress, inhibiting mTORC2 signaling. Ubiquitinated by the SCF(FBXW7) complex, leading to its degradation by the proteasome. Deubiquitinated by USP9X; deubiquitination stabilizes RICTOR and enhances its binding to MTOR, thus promoting mTORC2 complex assembly. Post-translationally, acetylated by EP300/p300 in response to glucose, leading to activate the mTORC2 complex. Acetylation by BLOC1S1/GCN5L1 in response to hypotoxic stress protects RICTOR against ubiquitination and subsequent degradation by the proteasome. In terms of tissue distribution, highest levels in liver and brain with expression also detected in heart, muscle, spleen and kidney (at protein level).

The protein localises to the cell membrane. It is found in the endoplasmic reticulum membrane. The protein resides in the lysosome membrane. Functionally, component of the mechanistic target of rapamycin complex 2 (mTORC2), which transduces signals from growth factors to pathways involved in proliferation, cytoskeletal organization, lipogenesis and anabolic output. In response to growth factors, mTORC2 phosphorylates and activates AGC protein kinase family members, including AKT (AKT1, AKT2 and AKT3), PKC (PRKCA, PRKCB and PRKCE) and SGK1. In contrast to mTORC1, mTORC2 is nutrient-insensitive. Within the mTORC2 complex, RICTOR probably acts as a molecular adapter. RICTOR is responsible for the FKBP12-rapamycin-insensitivity of mTORC2. mTORC2 plays a critical role in AKT1 activation by mediating phosphorylation of different sites depending on the context, such as 'Thr-450', 'Ser-473', 'Ser-477' or 'Thr-479', facilitating the phosphorylation of the activation loop of AKT1 on 'Thr-308' by PDPK1/PDK1 which is a prerequisite for full activation. mTORC2 catalyzes the phosphorylation of SGK1 at 'Ser-422' and of PRKCA on 'Ser-657'. The mTORC2 complex also phosphorylates various proteins involved in insulin signaling, such as FBXW8 and IGF2BP1. mTORC2 acts upstream of Rho GTPases to regulate the actin cytoskeleton, probably by activating one or more Rho-type guanine nucleotide exchange factors. mTORC2 promotes the serum-induced formation of stress-fibers or F-actin. Plays an essential role in embryonic growth and development. The protein is Rapamycin-insensitive companion of mTOR of Mus musculus (Mouse).